The chain runs to 158 residues: Large ribosomal subunit protein bL21 (158 aa).

The tract at residues 127 to 158 (TQETKSAASVKKAAKKSAPQKQAAVASNSKED) is disordered. Positions 131-158 (KSAASVKKAAKKSAPQKQAAVASNSKED) are enriched in low complexity.

This sequence belongs to the bacterial ribosomal protein bL21 family. Part of the 50S ribosomal subunit. Contacts protein L20.

Functionally, this protein binds to 23S rRNA in the presence of protein L20. This chain is Large ribosomal subunit protein bL21, found in Bartonella henselae (strain ATCC 49882 / DSM 28221 / CCUG 30454 / Houston 1) (Rochalimaea henselae).